We begin with the raw amino-acid sequence, 398 residues long: ATP-dependent RNA helicase eIF4A (398 aa).

Positions 25–53 (DSFDTMNLKPELLRGVYAYGFERPSAIQQ) match the Q motif motif. The 171-residue stretch at 56 to 226 (IMPVIKGHDV…TKFMRDPVRI (171 aa)) folds into the Helicase ATP-binding domain. 69–76 (AQSGTGKT) serves as a coordination point for ATP. The DEAD box motif lies at 174-177 (DEAD). The region spanning 237–398 (GIKQFYIAVE…EMPMNVADLI (162 aa)) is the Helicase C-terminal domain.

It belongs to the DEAD box helicase family. eIF4A subfamily. Component of the eIF4F complex, which composition varies with external and internal environmental conditions. It is composed of at least eIF4A, eIF4E and eIF4G.

The protein resides in the cytoplasm. It carries out the reaction ATP + H2O = ADP + phosphate + H(+). Its function is as follows. ATP-dependent RNA helicase which is a subunit of the eIF4F complex involved in cap recognition and is required for mRNA binding to ribosome. In the current model of translation initiation, eIF4A unwinds RNA secondary structures in the 5'-UTR of mRNAs which is necessary to allow efficient binding of the small ribosomal subunit, and subsequent scanning for the initiator codon. The polypeptide is ATP-dependent RNA helicase eIF4A (tif1) (Botryotinia fuckeliana (strain B05.10) (Noble rot fungus)).